The chain runs to 122 residues: Serum amyloid A-3 protein (122 aa).

Residues 1-18 (MKPFLAIIFCFLILGVDS) form the signal peptide. Residues 100 to 122 (ANKWGRSGKDPNHFRPAGLPSKY) are disordered.

Belongs to the SAA family. In terms of tissue distribution, expressed by the liver; secreted in plasma.

It is found in the secreted. Major acute phase reactant. Apolipoprotein of the HDL complex. In vitro exhibits antimicrobial activity against Escherichia coli, Streptococcus uberis and Pseudomonas aeruginosa. This is Serum amyloid A-3 protein (SAA3) from Mesocricetus auratus (Golden hamster).